The following is a 442-amino-acid chain: ATP-dependent protease ATPase subunit HslU (442 aa).

Residues Ile18 and 60-65 (GVGKTE) contribute to the ATP site. Residues 136–157 (LPKPKNDWESTETDSSSNTRQV) are disordered. Asp255, Glu320, and Arg392 together coordinate ATP.

The protein belongs to the ClpX chaperone family. HslU subfamily. As to quaternary structure, a double ring-shaped homohexamer of HslV is capped on each side by a ring-shaped HslU homohexamer. The assembly of the HslU/HslV complex is dependent on binding of ATP.

It localises to the cytoplasm. Its function is as follows. ATPase subunit of a proteasome-like degradation complex; this subunit has chaperone activity. The binding of ATP and its subsequent hydrolysis by HslU are essential for unfolding of protein substrates subsequently hydrolyzed by HslV. HslU recognizes the N-terminal part of its protein substrates and unfolds these before they are guided to HslV for hydrolysis. The protein is ATP-dependent protease ATPase subunit HslU of Shewanella baltica (strain OS185).